Here is a 478-residue protein sequence, read N- to C-terminus: GTPase Obg (478 aa).

The Obg domain occupies 2 to 159 (TTFVDRVELH…RDIVLELKTV (158 aa)). Residues 61 to 87 (HHSPHRKATNGQPGAGDNRSGKDGQDL) form a disordered region. Residues 160 to 330 (ADVALVGYPS…LSFALAGIIA (171 aa)) form the OBG-type G domain. GTP is bound by residues 166 to 173 (GYPSAGKS), 191 to 195 (FTTLV), 212 to 215 (DVPG), 282 to 285 (NKVD), and 311 to 313 (SAI). Residues serine 173 and threonine 193 each coordinate Mg(2+). The 83-residue stretch at 348 to 430 (PRAVDDAGFT…ENAVVFDWEP (83 aa)) folds into the OCT domain. The tract at residues 436–478 (AEMLGRRGEDHRLEEPRPAAQRRRERDAERDDAEKEYDEFDPF) is disordered. The span at 439 to 468 (LGRRGEDHRLEEPRPAAQRRRERDAERDDA) shows a compositional bias: basic and acidic residues. The segment covering 469–478 (EKEYDEFDPF) has biased composition (acidic residues).

The protein belongs to the TRAFAC class OBG-HflX-like GTPase superfamily. OBG GTPase family. In terms of assembly, monomer. The cofactor is Mg(2+).

The protein localises to the cytoplasm. Functionally, an essential GTPase which binds GTP, GDP and possibly (p)ppGpp with moderate affinity, with high nucleotide exchange rates and a fairly low GTP hydrolysis rate. Plays a role in control of the cell cycle, stress response, ribosome biogenesis and in those bacteria that undergo differentiation, in morphogenesis control. The chain is GTPase Obg from Streptomyces griseus subsp. griseus (strain JCM 4626 / CBS 651.72 / NBRC 13350 / KCC S-0626 / ISP 5235).